A 207-amino-acid chain; its full sequence is ATP synthase subunit b 2 (207 aa).

Residues 53 to 72 (TYASQLLWLVITFSVFYLLM) traverse the membrane as a helical segment.

It belongs to the ATPase B chain family. As to quaternary structure, F-type ATPases have 2 components, F(1) - the catalytic core - and F(0) - the membrane proton channel. F(1) has five subunits: alpha(3), beta(3), gamma(1), delta(1), epsilon(1). F(0) has three main subunits: a(1), b(2) and c(10-14). The alpha and beta chains form an alternating ring which encloses part of the gamma chain. F(1) is attached to F(0) by a central stalk formed by the gamma and epsilon chains, while a peripheral stalk is formed by the delta and b chains.

It is found in the cell inner membrane. F(1)F(0) ATP synthase produces ATP from ADP in the presence of a proton or sodium gradient. F-type ATPases consist of two structural domains, F(1) containing the extramembraneous catalytic core and F(0) containing the membrane proton channel, linked together by a central stalk and a peripheral stalk. During catalysis, ATP synthesis in the catalytic domain of F(1) is coupled via a rotary mechanism of the central stalk subunits to proton translocation. In terms of biological role, component of the F(0) channel, it forms part of the peripheral stalk, linking F(1) to F(0). The b'-subunit is a diverged and duplicated form of b found in plants and photosynthetic bacteria. This chain is ATP synthase subunit b 2 (atpF2), found in Rhizobium etli (strain CIAT 652).